The chain runs to 586 residues: CTP synthase (586 aa).

Residues 1–278 (MRKHPQTATK…DAFVVRRLNL (278 aa)) are amidoligase domain. Residue Ser-20 participates in CTP binding. Residue Ser-20 participates in UTP binding. ATP contacts are provided by residues 21-26 (SLGKGL) and Asp-78. Asp-78 and Glu-152 together coordinate Mg(2+). CTP is bound by residues 159-161 (DIE), 199-204 (KTKPTQ), and Lys-235. UTP contacts are provided by residues 199–204 (KTKPTQ) and Lys-235. The 249-residue stretch at 303-551 (RIALVGKYVE…VGAAIDYKAG (249 aa)) folds into the Glutamine amidotransferase type-1 domain. Gly-366 contributes to the L-glutamine binding site. The active-site Nucleophile; for glutamine hydrolysis is Cys-393. L-glutamine contacts are provided by residues 394–397 (LGLQ), Glu-416, and Arg-477. Active-site residues include His-524 and Glu-526. The disordered stretch occupies residues 560-586 (EIPEHTPNGSSHRDGVGQPLPEPASRG).

It belongs to the CTP synthase family. Homotetramer.

The catalysed reaction is UTP + L-glutamine + ATP + H2O = CTP + L-glutamate + ADP + phosphate + 2 H(+). It carries out the reaction L-glutamine + H2O = L-glutamate + NH4(+). It catalyses the reaction UTP + NH4(+) + ATP = CTP + ADP + phosphate + 2 H(+). Its pathway is pyrimidine metabolism; CTP biosynthesis via de novo pathway; CTP from UDP: step 2/2. With respect to regulation, allosterically activated by GTP, when glutamine is the substrate; GTP has no effect on the reaction when ammonia is the substrate. The allosteric effector GTP functions by stabilizing the protein conformation that binds the tetrahedral intermediate(s) formed during glutamine hydrolysis. Inhibited by the product CTP, via allosteric rather than competitive inhibition. Its function is as follows. Catalyzes the ATP-dependent amination of UTP to CTP with either L-glutamine or ammonia as the source of nitrogen. Regulates intracellular CTP levels through interactions with the four ribonucleotide triphosphates. This chain is CTP synthase, found in Mycobacterium tuberculosis (strain CDC 1551 / Oshkosh).